The following is a 797-amino-acid chain: Probable DNA polymerase (797 aa).

The protein belongs to the DNA polymerase type-B family.

It is found in the mitochondrion. It catalyses the reaction DNA(n) + a 2'-deoxyribonucleoside 5'-triphosphate = DNA(n+1) + diphosphate. In Agaricus bitorquis (Pavement mushroom), this protein is Probable DNA polymerase.